The following is a 601-amino-acid chain: Sestrin homolog (601 aa).

Residues methionine 1 to glutamine 11 are compositionally biased toward polar residues. The tract at residues methionine 1–asparagine 58 is disordered. The N-linked (GlcNAc...) asparagine glycan is linked to asparagine 20. A compositionally biased stretch (low complexity) spans serine 21–serine 32. N-linked (GlcNAc...) asparagine glycans are attached at residues asparagine 322 and asparagine 330. Positions arginine 355 to serine 425 are disordered. Basic and acidic residues predominate over residues leucine 368–glycine 379. Over residues aspartate 380 to serine 425 the composition is skewed to low complexity. Asparagine 387, asparagine 388, asparagine 406, asparagine 438, and asparagine 499 each carry an N-linked (GlcNAc...) asparagine glycan.

This sequence belongs to the sestrin family.

It is found in the nucleus. The protein resides in the cytoplasm. May function as a negative feedback regulator of TOR function. This chain is Sestrin homolog, found in Dictyostelium discoideum (Social amoeba).